Consider the following 29-residue polypeptide: GLWSKIKETGKEAAKAAGKAALDKIAEAV.

Valine 29 bears the Valine amide mark.

In terms of tissue distribution, expressed by the skin glands.

It is found in the secreted. Its function is as follows. Has antimicrobial activity. This Phyllomedusa trinitatis (Trinidad leaf frog) protein is Dermaseptin-1.2TR.